The sequence spans 106 residues: Replication restart protein PriB (106 aa).

One can recognise an SSB domain in the interval 4-103; sequence TNRLVLSGTV…LHAEQIEFID (100 aa).

Belongs to the PriB family. As to quaternary structure, homodimer. Interacts with PriA and DnaT. Component of the replication restart primosome. Primosome assembly occurs via a 'hand-off' mechanism. PriA binds to replication forks, subsequently PriB then DnaT bind; DnaT then displaces ssDNA to generate the helicase loading substrate.

Functionally, involved in the restart of stalled replication forks, which reloads the replicative helicase on sites other than the origin of replication; the PriA-PriB pathway is the major replication restart pathway. During primosome assembly it facilitates complex formation between PriA and DnaT on DNA; stabilizes PriA on DNA. Stimulates the DNA unwinding activity of PriA helicase. The sequence is that of Replication restart protein PriB from Yersinia pestis.